The chain runs to 466 residues: Ribulose bisphosphate carboxylase large chain (466 aa).

The residue at position 5 (K5) is an N6,N6,N6-trimethyllysine. Residues N114 and T164 each coordinate substrate. The Proton acceptor role is filled by K166. K168 provides a ligand contact to substrate. Mg(2+)-binding residues include K192, D194, and E195. N6-carboxylysine is present on K192. The active-site Proton acceptor is H285. Substrate is bound by residues R286, H318, and S370.

The protein belongs to the RuBisCO large chain family. Type I subfamily. Heterohexadecamer of 8 large chains and 8 small chains; disulfide-linked. The disulfide link is formed within the large subunit homodimers. Requires Mg(2+) as cofactor. In terms of processing, the disulfide bond which can form in the large chain dimeric partners within the hexadecamer appears to be associated with oxidative stress and protein turnover.

Its subcellular location is the plastid. It is found in the chloroplast. The enzyme catalyses 2 (2R)-3-phosphoglycerate + 2 H(+) = D-ribulose 1,5-bisphosphate + CO2 + H2O. It catalyses the reaction D-ribulose 1,5-bisphosphate + O2 = 2-phosphoglycolate + (2R)-3-phosphoglycerate + 2 H(+). RuBisCO catalyzes two reactions: the carboxylation of D-ribulose 1,5-bisphosphate, the primary event in carbon dioxide fixation, as well as the oxidative fragmentation of the pentose substrate in the photorespiration process. Both reactions occur simultaneously and in competition at the same active site. This is Ribulose bisphosphate carboxylase large chain from Eremothamnus marlothianus.